We begin with the raw amino-acid sequence, 29 residues long: Dermaseptin-H7 (29 aa).

The residue at position 29 (Leu29) is a Leucine amide.

This sequence belongs to the frog skin active peptide (FSAP) family. Dermaseptin subfamily. In terms of tissue distribution, expressed by the skin glands.

It is found in the secreted. Has antibacterial activity against the Gram-negative bacterium E.coli and the Gram-positive bacterium S.aureus. Has antiprotozoal activity against L.amazonensis. Has antifungal activity. Has no hemolytic activity. This is Dermaseptin-H7 from Pithecopus hypochondrialis (Orange-legged leaf frog).